We begin with the raw amino-acid sequence, 359 residues long: Ferredoxin--NADP reductase (359 aa).

The FAD site is built by Asp48, Gln56, Tyr61, Ala101, Phe139, Asp304, and Ser345. Residues 340–359 form a disordered region; it reads VHTHTSNDTNLQSRLHAAAE. Residues 341–352 show a composition bias toward polar residues; sequence HTHTSNDTNLQS.

This sequence belongs to the ferredoxin--NADP reductase type 2 family. As to quaternary structure, homodimer. It depends on FAD as a cofactor.

It carries out the reaction 2 reduced [2Fe-2S]-[ferredoxin] + NADP(+) + H(+) = 2 oxidized [2Fe-2S]-[ferredoxin] + NADPH. The chain is Ferredoxin--NADP reductase from Ralstonia nicotianae (strain ATCC BAA-1114 / GMI1000) (Ralstonia solanacearum).